A 255-amino-acid polypeptide reads, in one-letter code: NAD kinase (255 aa).

Asp-44 serves as the catalytic Proton acceptor. NAD(+) contacts are provided by residues Asp-44–Gly-45, His-49, Asn-114–Glu-115, Asp-144, Ala-152, Ser-155–Ser-160, and Gln-216.

It belongs to the NAD kinase family. It depends on a divalent metal cation as a cofactor.

Its subcellular location is the cytoplasm. The catalysed reaction is NAD(+) + ATP = ADP + NADP(+) + H(+). Functionally, involved in the regulation of the intracellular balance of NAD and NADP, and is a key enzyme in the biosynthesis of NADP. Catalyzes specifically the phosphorylation on 2'-hydroxyl of the adenosine moiety of NAD to yield NADP. The protein is NAD kinase of Rickettsia conorii (strain ATCC VR-613 / Malish 7).